The sequence spans 365 residues: Glycerol dehydrogenase (365 aa).

5 residues coordinate NAD(+): Asp37, Gly94, Lys95, Thr116, and Ser119. Asp121 contacts glycerol. Residues Ser125, Leu127, and Tyr131 each coordinate NAD(+). 3 residues coordinate Zn(2+): Asp171, His254, and His271. His254 lines the glycerol pocket.

The protein belongs to the iron-containing alcohol dehydrogenase family. Requires Zn(2+) as cofactor.

The catalysed reaction is glycerol + NAD(+) = dihydroxyacetone + NADH + H(+). It functions in the pathway polyol metabolism; glycerol fermentation; glycerone phosphate from glycerol (oxidative route): step 1/2. Its function is as follows. Catalyzes the NAD-dependent oxidation of glycerol to dihydroxyacetone (glycerone). Allows microorganisms to utilize glycerol as a source of carbon under anaerobic conditions. The protein is Glycerol dehydrogenase (gldA) of Pseudomonas putida (Arthrobacter siderocapsulatus).